A 464-amino-acid polypeptide reads, in one-letter code: CRISPR system endoribonuclease Csm6 (464 aa).

Residues 1 to 190 are CARF domain; sequence MEDLDALWER…LRILPNPHEA (190 aa). Positions 191–464 are HEPN domain; that stretch reads LAEVDALFAK…LSPEPVPLGF (274 aa).

This sequence belongs to the CRISPR-associated Csm6 family. As to quaternary structure, homodimer. The protein forms a twisted, head-to-head dimer; the composite ssRNase active site is formed at the dimer interface. Requires Does not require a metal cofactor. as cofactor.

Non-specific ssRNase activity is allosterically activated about 1000-fold by cyclic tetraadenylate (cA4), which probably binds to its CARF domain. Its function is as follows. CRISPR (clustered regularly interspaced short palindromic repeat) is an adaptive immune system that provides protection against mobile genetic elements (viruses, transposable elements and conjugative plasmids). CRISPR clusters contain spacers, sequences complementary to antecedent mobile elements, and target invading nucleic acids. CRISPR clusters are transcribed and processed into CRISPR RNA (crRNA). The type III-A Csm effector complex binds crRNA and acts as a crRNA-guided RNase, DNase and cyclic oligoadenylate synthase; binding of target RNA cognate to the crRNA is required for all activities. This protein is not part of the Csm effector complex. A single-strand-specific endoribonuclease (ssRNase) producing free 5'-OH. Activity is approximately 1000-fold stimulated by cyclic oligoadenylate (cOA); only cyclic tetraadenylate (cA4) stimulates the ssRNase activity while linear oligoadenylates do not activate the RNase. Another study showed stimulation by linear tetraadenylate at very high concentrations, but did not examine stimulation by cA4. This chain is CRISPR system endoribonuclease Csm6, found in Thermus thermophilus (strain ATCC 27634 / DSM 579 / HB8).